A 248-amino-acid polypeptide reads, in one-letter code: UDP-2,3-diacylglucosamine hydrolase (248 aa).

Mn(2+) contacts are provided by aspartate 8, histidine 10, aspartate 41, asparagine 79, and histidine 114. 79 to 80 (NR) is a substrate binding site. Positions 122, 160, 171, 174, and 202 each coordinate substrate. Positions 202 and 204 each coordinate Mn(2+).

The protein belongs to the LpxH family. Mn(2+) serves as cofactor.

It localises to the cell inner membrane. It carries out the reaction UDP-2-N,3-O-bis[(3R)-3-hydroxytetradecanoyl]-alpha-D-glucosamine + H2O = 2-N,3-O-bis[(3R)-3-hydroxytetradecanoyl]-alpha-D-glucosaminyl 1-phosphate + UMP + 2 H(+). Its pathway is glycolipid biosynthesis; lipid IV(A) biosynthesis; lipid IV(A) from (3R)-3-hydroxytetradecanoyl-[acyl-carrier-protein] and UDP-N-acetyl-alpha-D-glucosamine: step 4/6. In terms of biological role, hydrolyzes the pyrophosphate bond of UDP-2,3-diacylglucosamine to yield 2,3-diacylglucosamine 1-phosphate (lipid X) and UMP by catalyzing the attack of water at the alpha-P atom. Involved in the biosynthesis of lipid A, a phosphorylated glycolipid that anchors the lipopolysaccharide to the outer membrane of the cell. The protein is UDP-2,3-diacylglucosamine hydrolase of Stenotrophomonas maltophilia (strain K279a).